The primary structure comprises 185 residues: Ribosome-recycling factor (185 aa).

This sequence belongs to the RRF family.

The protein localises to the cytoplasm. Its function is as follows. Responsible for the release of ribosomes from messenger RNA at the termination of protein biosynthesis. May increase the efficiency of translation by recycling ribosomes from one round of translation to another. The chain is Ribosome-recycling factor from Legionella pneumophila (strain Corby).